Here is a 332-residue protein sequence, read N- to C-terminus: Ribose-phosphate pyrophosphokinase (332 aa).

Residue 57–59 participates in ATP binding; the sequence is DGE. His150 and Asp189 together coordinate Mg(2+). Lys213 is an active-site residue. Residues Arg215, Asp239, and 243–247 contribute to the D-ribose 5-phosphate site; that span reads DTAGT.

This sequence belongs to the ribose-phosphate pyrophosphokinase family. Class I subfamily. In terms of assembly, homohexamer. Requires Mg(2+) as cofactor.

It localises to the cytoplasm. The enzyme catalyses D-ribose 5-phosphate + ATP = 5-phospho-alpha-D-ribose 1-diphosphate + AMP + H(+). Its pathway is metabolic intermediate biosynthesis; 5-phospho-alpha-D-ribose 1-diphosphate biosynthesis; 5-phospho-alpha-D-ribose 1-diphosphate from D-ribose 5-phosphate (route I): step 1/1. In terms of biological role, involved in the biosynthesis of the central metabolite phospho-alpha-D-ribosyl-1-pyrophosphate (PRPP) via the transfer of pyrophosphoryl group from ATP to 1-hydroxyl of ribose-5-phosphate (Rib-5-P). This chain is Ribose-phosphate pyrophosphokinase, found in Gloeobacter violaceus (strain ATCC 29082 / PCC 7421).